Reading from the N-terminus, the 962-residue chain is Oncostatin-M-specific receptor subunit beta (962 aa).

Residues 1 to 28 (MAFSVVLHQVTFLLAVLSLRTSQSKVLG) form the signal peptide. Over 29-738 (EPLQLTPEIH…VTTPDVRSHM (710 aa)) the chain is Extracellular. N-linked (GlcNAc...) asparagine glycosylation is present at Asn-219. Fibronectin type-III domains lie at 237–332 (EPKN…VHPK), 333–426 (APHD…TPEA), 428–527 (PSEA…SGHE), 528–621 (EVHE…TQEL), and 623–734 (PSVN…TPDV). A disulfide bridge connects residues Cys-243 and Cys-253. Asn-324 carries an N-linked (GlcNAc...) asparagine glycan. A WSXWS motif motif is present at residues 413 to 417 (WSDWM). 3 N-linked (GlcNAc...) asparagine glycosylation sites follow: Asn-492, Asn-578, and Asn-723. Residues 739-759 (LLQIILPMTLGVFLSIIVCYW) traverse the membrane as a helical segment. Residues 760–962 (KSQWVKEKCY…ASLKENNLTS (203 aa)) lie on the Cytoplasmic side of the membrane. Residues 768–776 (CYPDIPNPY) carry the Box 1 motif motif. Residues 818–840 (VGSGKLHTEDVPTKPPLVPTEKD) are disordered.

This sequence belongs to the type I cytokine receptor family. Type 2 subfamily. In terms of assembly, heterodimer composed of OSMR and IL6ST (type II OSM receptor). Heterodimer with IL31RA to form the IL31 receptor. In terms of tissue distribution, widely expressed. Expressed at high levels in the liver, skin and spleen. In the liver it is expressed exclusively in the oval cells.

The protein localises to the membrane. Associates with IL31RA to form the IL31 receptor. Binds IL31 and activates STAT1, STAT3 and STAT5. Capable of transducing OSM-specific signaling events. The OSM/OSM-R system is pivotal in the differentiation of oval cells into hepatocytes, thereby promoting liver regeneration. This chain is Oncostatin-M-specific receptor subunit beta (Osmr), found in Rattus norvegicus (Rat).